The primary structure comprises 132 residues: Fatty acid-binding protein, intestinal (132 aa).

A2 bears the N-acetylalanine mark. The hexadecanoate site is built by W83 and R107. Positions 83 and 107 each coordinate tetradecanoate.

It belongs to the calycin superfamily. Fatty-acid binding protein (FABP) family.

The protein localises to the cytoplasm. Functionally, FABPs are thought to play a role in the intracellular transport of long-chain fatty acids and their acyl-CoA esters. FABP2 is probably involved in triglyceride-rich lipoprotein synthesis. Binds saturated long-chain fatty acids with a high affinity, but binds with a lower affinity to unsaturated long-chain fatty acids. FABP2 may also help maintain energy homeostasis by functioning as a lipid sensor. The chain is Fatty acid-binding protein, intestinal (FABP2) from Sus scrofa (Pig).